The chain runs to 76 residues: EMBRYO SURROUNDING FACTOR 1-like protein 8 (76 aa).

The first 22 residues, 1 to 22 (MSSSQFFILCIILISSFPLHEC), serve as a signal peptide directing secretion. 4 disulfides stabilise this stretch: cysteine 38-cysteine 54, cysteine 43-cysteine 74, cysteine 52-cysteine 70, and cysteine 55-cysteine 63.

The protein belongs to the MEG family. As to expression, expressed in flowers.

The polypeptide is EMBRYO SURROUNDING FACTOR 1-like protein 8 (ESFL8) (Arabidopsis thaliana (Mouse-ear cress)).